The chain runs to 132 residues: MSKSLNIIWQYIRAFVLIYACLYAGIFLASLLPITIPGSIIGMLILFVLLALQILPAKWVNPGCYVLIRYMALLFVPIGVGVMQYFDLLRAQFGPVVVSCAISTLVVFVVVSWSSHLIHGERKVVGQKGTKK.

Transmembrane regions (helical) follow at residues 7–27, 31–51, 63–83, and 93–113; these read IIWQ…AGIF, LLPI…VLLA, GCYV…VGVM, and FGPV…VVSW.

It belongs to the UPF0299 family.

It is found in the cell inner membrane. This Salmonella agona (strain SL483) protein is UPF0299 membrane protein YohJ.